Here is a 186-residue protein sequence, read N- to C-terminus: Small ribosomal subunit protein uS7 (186 aa).

This sequence belongs to the universal ribosomal protein uS7 family. Part of the 30S ribosomal subunit.

One of the primary rRNA binding proteins, it binds directly to 16S rRNA where it nucleates assembly of the head domain of the 30S subunit. Is located at the subunit interface close to the decoding center. In Methanococcoides burtonii (strain DSM 6242 / NBRC 107633 / OCM 468 / ACE-M), this protein is Small ribosomal subunit protein uS7.